The chain runs to 146 residues: Meiotically up-regulated gene 151 protein (146 aa).

The disordered stretch occupies residues 1 to 40; that stretch reads MSLVAYDSEEEEQTSLVNENNDIKGRSEEPHWKIPNSPKA. Residues 21 to 32 show a composition bias toward basic and acidic residues; that stretch reads NDIKGRSEEPHW.

It is found in the nucleus. In terms of biological role, has a role in meiosis. The polypeptide is Meiotically up-regulated gene 151 protein (mug151) (Schizosaccharomyces pombe (strain 972 / ATCC 24843) (Fission yeast)).